The sequence spans 411 residues: MMP alpha-(1-&gt;4)-mannosyltransferase (411 aa).

This sequence belongs to the glycosyltransferase group 1 family. Glycosyltransferase 4 subfamily.

The catalysed reaction is [3-O-methyl-alpha-D-mannosyl-(1-&gt;4)](n)-3-O-methyl-D-mannose + GDP-alpha-D-mannose = alpha-D-mannosyl-(1-&gt;4)-[3-O-methyl-alpha-D-mannosyl-(1-&gt;4)](n)-3-O-methyl-D-mannose + GDP + H(+). It catalyses the reaction [3-O-methyl-alpha-D-mannosyl-(1-&gt;4)](n)-1-O,3-O-dimethyl-alpha-D-mannose + GDP-alpha-D-mannose = alpha-D-mannosyl-(1-&gt;4)-[3-O-methyl-alpha-D-mannosyl-(1-&gt;4)](n)-1-O,3-O-dimethyl-alpha-D-mannose + GDP + H(+). With respect to regulation, activity is significantly enhanced in the presence of Mg(2+). Glycosyltransferase involved in the biosynthesis of 3-O-methylmannose polysaccharides (MMP), which are intracellular polymethylated polysaccharides implicated in the modulation of fatty acid metabolism in non-tuberculous mycobacteria. Highly specific alpha-(1-&gt;4)-mannosyltransferase that can transfer mannose units from GDP-mannose to a wide range of alpha-(1-&gt;4) oligomannosides longer than three mannoses, including all hydrolytic products of MmpH. Can use synthetic trimannosides and tetramannosides as substrates, but not mono- and disaccharides, and is significantly more active with the methylated substrates, preferring the tetramannosides over the trimannosides. In Mycolicibacterium hassiacum (strain DSM 44199 / CIP 105218 / JCM 12690 / 3849) (Mycobacterium hassiacum), this protein is MMP alpha-(1-&gt;4)-mannosyltransferase.